A 411-amino-acid chain; its full sequence is C6 finger domain transcription factor hasA (411 aa).

Polar residues predominate over residues Met-1–Ser-17. Residues Met-1–His-21 form a disordered region. A DNA-binding region (zn(2)-C6 fungal-type) is located at residues Cys-28–Cys-54.

Its subcellular location is the nucleus. Its function is as follows. Transcription factor; part of the gene cluster that mediates the biosynthesis of hexadehydro-astechrome (HAS), a tryptophan-derived iron(III)-complex that acts as a virulence factor in infected mice. Positively regulates the expression of the HAS biosynthetic genes. This chain is C6 finger domain transcription factor hasA, found in Aspergillus fumigatus (strain CBS 144.89 / FGSC A1163 / CEA10) (Neosartorya fumigata).